Here is a 283-residue protein sequence, read N- to C-terminus: MKLPAIRYASPASIEDACDLLSTDEDSKIIAGGQSLLPVMAMRLAQPSVVIDLGNVPGLTRLEEVGDYVRFGPMVTHATIVNSPAVAKHLPMMAAAGRHIAHPQIRNRGTLGGSLAHGDAAGEWPLVLLALNGMVEVQSVRGRRTIEADDLFVGPYMTSLAADEIITDVWIPSRPNGWGYGEFARRSGDYGLANVAVVLSTADSRISDVRIAVGGAVGKIQRVPDAEDVLNGSELSPERAEAASEAGAKSLSYISDIHGSAEYRHGLVQELIRRTIVEAGART.

The FAD-binding PCMH-type domain occupies 1–176 (MKLPAIRYAS…TDVWIPSRPN (176 aa)). FAD-binding positions include 31 to 35 (AGGQS) and 110 to 114 (TLGGS).

Heterotrimer composed of a large subunit (NdhL), a medium subunit (NdhM) and a small subunit (NdhS). It depends on FAD as a cofactor.

Its subcellular location is the cytoplasm. It catalyses the reaction (R)-nicotine + A + H2O = (R)-6-hydroxynicotine + AH2. The catalysed reaction is (S)-nicotine + A + H2O = (S)-6-hydroxynicotine + AH2. Its pathway is alkaloid degradation; nicotine degradation; 6-hydroxypseudooxynicotine from nicotine (R-isomer route): step 1/2. It participates in alkaloid degradation; nicotine degradation; 6-hydroxypseudooxynicotine from nicotine (S-isomer route): step 1/2. Nicotine dehydrogenase activity is inhibited by tungsten. In terms of biological role, component of the nicotine 6-hydroxylase, which is involved in the degradation of nicotine. Catalyzes the hydroxylation of the pyridine ring at C6 to form 6-hydroxynicotine. Can use both L-nicotine and D-nicotine. This Paenarthrobacter nicotinovorans (Arthrobacter nicotinovorans) protein is Nicotine 6-hydroxylase medium subunit.